Here is a 95-residue protein sequence, read N- to C-terminus: MSVDQETVKRVSHLARIALHNDEVELMTKELNVILGFVEQLSEVDVSGVEPLTSVMPMTLRMREDSVTDGDKVADIVANAPVTEENFFLVSKVVE.

It belongs to the GatC family. Heterotrimer of A, B and C subunits.

The enzyme catalyses L-glutamyl-tRNA(Gln) + L-glutamine + ATP + H2O = L-glutaminyl-tRNA(Gln) + L-glutamate + ADP + phosphate + H(+). The catalysed reaction is L-aspartyl-tRNA(Asn) + L-glutamine + ATP + H2O = L-asparaginyl-tRNA(Asn) + L-glutamate + ADP + phosphate + 2 H(+). Allows the formation of correctly charged Asn-tRNA(Asn) or Gln-tRNA(Gln) through the transamidation of misacylated Asp-tRNA(Asn) or Glu-tRNA(Gln) in organisms which lack either or both of asparaginyl-tRNA or glutaminyl-tRNA synthetases. The reaction takes place in the presence of glutamine and ATP through an activated phospho-Asp-tRNA(Asn) or phospho-Glu-tRNA(Gln). This chain is Aspartyl/glutamyl-tRNA(Asn/Gln) amidotransferase subunit C, found in Bartonella henselae (strain ATCC 49882 / DSM 28221 / CCUG 30454 / Houston 1) (Rochalimaea henselae).